A 574-amino-acid polypeptide reads, in one-letter code: MNLKNTIKKDIQDALIKIAIINCDPVITLNKKTKIGHYQLNNLIKIANISNLKPFELANRIILNIKKKYMYKEITFSQPGFINFLINPYWISEQLEKIFLSPRLGINHVNAQNIVIDYSSPNIAKEMHIGHLRSTIIGDVMARILDFLGHNVIRANHIGDWGTQFGMLIAYLEVKKLVNSPLSLMKLEEYYCKAKKKYDIDQLFAEKSREYVVKLQNGDQYCYSIWKKLVSITMLENCKIYKRLHVTLKKKHTMGESIYNKMLPNIIEDLKNKKIAIEKNGSTIVFLKEFKNRLGEPMGVVIQKKDKGFLYSTTDIACLKYRYQVLHADRIIYYTDSRQHQHLLQAWTIAKKALYISQNLLLEHHIFGMMLSKDKRPFKTRDGDTIKLSALLDEATERAMRLIKNKQPNLSKKKLNQLSNIIGVGAVKYADLSKNRNTNYIFDWNEMLSFEGNTAPYIQYAYTRIVSILKKSNMPIKKLKEKIFLTKESEINLAIKILEFEEIILLISQKGTPHILCKYLYHLATSFSHFYENCSILFPKKIKTCKSRLKLSILTAKTLKKGLNMLGIRVVKKM.

Positions 121 to 131 match the 'HIGH' region motif; it reads PNIAKEMHIGH.

This sequence belongs to the class-I aminoacyl-tRNA synthetase family. Monomer.

The protein resides in the cytoplasm. It carries out the reaction tRNA(Arg) + L-arginine + ATP = L-arginyl-tRNA(Arg) + AMP + diphosphate. The protein is Arginine--tRNA ligase of Buchnera aphidicola subsp. Acyrthosiphon pisum (strain Tuc7).